The sequence spans 541 residues: 2-isopropylmalate synthase (541 aa).

Residues valine 8–tyrosine 284 enclose the Pyruvate carboxyltransferase domain. 4 residues coordinate Mn(2+): aspartate 17, histidine 208, histidine 210, and asparagine 244. The segment at arginine 408 to serine 541 is regulatory domain.

Belongs to the alpha-IPM synthase/homocitrate synthase family. LeuA type 1 subfamily. In terms of assembly, homodimer. The cofactor is Mn(2+).

The protein resides in the cytoplasm. It catalyses the reaction 3-methyl-2-oxobutanoate + acetyl-CoA + H2O = (2S)-2-isopropylmalate + CoA + H(+). Its pathway is amino-acid biosynthesis; L-leucine biosynthesis; L-leucine from 3-methyl-2-oxobutanoate: step 1/4. Functionally, catalyzes the condensation of the acetyl group of acetyl-CoA with 3-methyl-2-oxobutanoate (2-ketoisovalerate) to form 3-carboxy-3-hydroxy-4-methylpentanoate (2-isopropylmalate). This chain is 2-isopropylmalate synthase, found in Trichodesmium erythraeum (strain IMS101).